Reading from the N-terminus, the 152-residue chain is Ribosome maturation factor RimP (152 aa).

The protein belongs to the RimP family.

It localises to the cytoplasm. Its function is as follows. Required for maturation of 30S ribosomal subunits. In Yersinia pestis, this protein is Ribosome maturation factor RimP.